The primary structure comprises 355 residues: 6-aminohexanoate-oligomer endohydrolase (355 aa).

The active-site Nucleophile is the threonine 267.

It belongs to the peptidase S58 family. In terms of assembly, heterotetramer composed of 4 alpha/beta heterodimers. Expressed as an inactive precursor that is cleaved autocatalytically at Asn266/Thr267 to generate an active enzyme composed of an alpha subunit and a beta subunit.

It carries out the reaction [N-(6-aminohexanoyl)]n + H2O = [N-(6-aminohexanoyl)]n-x + [N-(6-aminohexanoyl)]x.. Its pathway is xenobiotic degradation; nylon-6 oligomer degradation. Functionally, involved in the degradation of nylon-6 oligomers. Degrades cyclic and linear oligomers of 6-aminohexanoate (Ahx) with a degree of polymerization greater than three by an endo-type mode. Cannot use Ahx cyclic dimer or the Ahx linear dimer. The polypeptide is 6-aminohexanoate-oligomer endohydrolase (Kocuria sp. (strain KY2)).